Consider the following 580-residue polypeptide: Tricyclene synthase TPS4, chloroplastic (580 aa).

The transit peptide at 1–41 (MLLNSSFISLPSFFKSQELGRTNLLIHRNGSPLLCYATNTN) directs the protein to the chloroplast. (2E)-geranyl diphosphate is bound by residues Arg-296, Asp-334, Asp-338, Arg-475, and Asn-478. Positions 334 and 338 each coordinate Mg(2+). The DDXXD motif signature appears at 334–338 (DDIYD). Residues Asn-478, Thr-482, and Glu-486 each contribute to the Mg(2+) site.

The protein belongs to the terpene synthase family. Tpsb subfamily. It depends on Mg(2+) as a cofactor. Mn(2+) serves as cofactor. In terms of tissue distribution, expressed in leaves.

It localises to the plastid. The protein resides in the chloroplast stroma. It catalyses the reaction (2E)-geranyl diphosphate = tricyclene + diphosphate. The enzyme catalyses (2E)-geranyl diphosphate = (E)-beta-ocimene + diphosphate. Its pathway is secondary metabolite biosynthesis; terpenoid biosynthesis. Its function is as follows. Promotes the emission of terpenes volatile organic compounds (VOC) in response to damage mediated by arthropod herbivores (e.g. Spodoptera exigua), probably to attract natural enemies of the herbivores. The protein is Tricyclene synthase TPS4, chloroplastic (TPS4) of Medicago truncatula (Barrel medic).